The following is an 865-amino-acid chain: Xylosyltransferase 2 (865 aa).

The Cytoplasmic portion of the chain corresponds to 1–15 (MVASARVQKLVRRYK). A helical; Signal-anchor for type II membrane protein transmembrane segment spans residues 16–36 (LAIATALAILLLQGLVVWSFS). Topologically, residues 37 to 865 (GLEEDEPGEK…GPVKADGRLR (829 aa)) are lumenal. Positions 39 to 155 (EEDEPGEKGR…SVEGAPQPTD (117 aa)) are disordered. The span at 53–65 (RPLDPGEGSKDTD) shows a compositional bias: basic and acidic residues. Over residues 73 to 82 (SAGRRHGRWR) the composition is skewed to basic residues. Asn-122 carries an N-linked (GlcNAc...) asparagine glycan. 4 disulfide bridges follow: Cys-162-Cys-190, Cys-206-Cys-448, Cys-467-Cys-480, and Cys-469-Cys-478. UDP-alpha-D-xylose contacts are provided by residues Val-239, Asp-267, and 296-298 (TIW). A glycan (N-linked (GlcNAc...) asparagine) is linked at Asn-327. 400-401 (DW) is a binding site for UDP-alpha-D-xylose. UDP-alpha-D-xylose contacts are provided by residues Ser-481 and 504–505 (RK). Disulfide bonds link Cys-581/Cys-833 and Cys-826/Cys-839. N-linked (GlcNAc...) asparagine glycosylation is present at Asn-683.

Belongs to the glycosyltransferase 14 family. XylT subfamily. As to quaternary structure, monomer. Requires Mg(2+) as cofactor. Mn(2+) serves as cofactor. Post-translationally, contains disulfide bonds. In terms of tissue distribution, detected in brain, liver, lung, kidney, heart, spleen and testis, and at lower levels in skeletal muscle.

It localises to the golgi apparatus membrane. The protein resides in the secreted. It catalyses the reaction UDP-alpha-D-xylose + L-seryl-[protein] = 3-O-(beta-D-xylosyl)-L-seryl-[protein] + UDP + H(+). The protein operates within glycan metabolism; chondroitin sulfate biosynthesis. It functions in the pathway glycan metabolism; heparan sulfate biosynthesis. In terms of biological role, catalyzes the first step in the biosynthesis of chondroitin sulfate, heparan sulfate and dermatan sulfate proteoglycans, such as DCN. Transfers D-xylose from UDP-D-xylose to specific serine residues of the core protein. This Mus musculus (Mouse) protein is Xylosyltransferase 2 (Xylt2).